Consider the following 161-residue polypeptide: Protein ZMO0507 (161 aa).

It belongs to the free Met sulfoxide reductase family.

In Zymomonas mobilis subsp. mobilis (strain ATCC 31821 / ZM4 / CP4), this protein is Protein ZMO0507.